We begin with the raw amino-acid sequence, 626 residues long: Membrane protein insertase YidC (626 aa).

The next 5 membrane-spanning stretches (helical) occupy residues 8–28 (LILA…LFPP), 399–419 (MGLA…PLAY), 469–489 (LPIL…FVTL), 527–547 (SIMA…SMWL), and 563–583 (IFAW…SGLL).

It belongs to the OXA1/ALB3/YidC family. Type 1 subfamily. As to quaternary structure, interacts with the Sec translocase complex via SecD. Specifically interacts with transmembrane segments of nascent integral membrane proteins during membrane integration.

The protein resides in the cell inner membrane. Required for the insertion and/or proper folding and/or complex formation of integral membrane proteins into the membrane. Involved in integration of membrane proteins that insert both dependently and independently of the Sec translocase complex, as well as at least some lipoproteins. Aids folding of multispanning membrane proteins. In Jannaschia sp. (strain CCS1), this protein is Membrane protein insertase YidC.